The chain runs to 464 residues: tRNA modification GTPase MnmE (464 aa).

Residues Arg-27, Glu-90, and Lys-129 each contribute to the (6S)-5-formyl-5,6,7,8-tetrahydrofolate site. The TrmE-type G domain maps to 222–384 (GVTLVLAGSV…LYDKIKTLIS (163 aa)). GTP is bound by residues 232-237 (NAGKSS), 251-257 (SSYPGTT), and 276-279 (DTAG). Mg(2+) is bound by residues Ser-236 and Thr-257. Lys-464 provides a ligand contact to (6S)-5-formyl-5,6,7,8-tetrahydrofolate.

Belongs to the TRAFAC class TrmE-Era-EngA-EngB-Septin-like GTPase superfamily. TrmE GTPase family. As to quaternary structure, homodimer. Heterotetramer of two MnmE and two MnmG subunits. Requires K(+) as cofactor.

It localises to the cytoplasm. Its function is as follows. Exhibits a very high intrinsic GTPase hydrolysis rate. Involved in the addition of a carboxymethylaminomethyl (cmnm) group at the wobble position (U34) of certain tRNAs, forming tRNA-cmnm(5)s(2)U34. The protein is tRNA modification GTPase MnmE of Borrelia garinii subsp. bavariensis (strain ATCC BAA-2496 / DSM 23469 / PBi) (Borreliella bavariensis).